A 383-amino-acid chain; its full sequence is tRNA-specific 2-thiouridylase MnmA (383 aa).

ATP contacts are provided by residues 30–37 (GLSGGVDS) and Leu-56. Cys-117 serves as the catalytic Nucleophile. A disulfide bridge connects residues Cys-117 and Cys-216. An ATP-binding site is contributed by Gly-142. Residues 166–168 (KDQ) are interaction with tRNA. The active-site Cysteine persulfide intermediate is Cys-216. The interaction with tRNA stretch occupies residues 321–322 (RY).

It belongs to the MnmA/TRMU family.

The protein localises to the cytoplasm. The catalysed reaction is S-sulfanyl-L-cysteinyl-[protein] + uridine(34) in tRNA + AH2 + ATP = 2-thiouridine(34) in tRNA + L-cysteinyl-[protein] + A + AMP + diphosphate + H(+). Catalyzes the 2-thiolation of uridine at the wobble position (U34) of tRNA, leading to the formation of s(2)U34. The chain is tRNA-specific 2-thiouridylase MnmA from Synechococcus sp. (strain CC9605).